We begin with the raw amino-acid sequence, 662 residues long: Polyunsaturated fatty acid (12S)/(13S)-lipoxygenase, epidermal-type (662 aa).

The PLAT domain occupies 2 to 114; the sequence is GKYKILVVTG…TIYLPEGTAL (113 aa). The Lipoxygenase domain maps to 114–662; the sequence is LKVNDDTKNL…PSMVENSVTI (549 aa). Positions 360, 365, 540, 544, and 662 each coordinate Fe cation.

Belongs to the lipoxygenase family. Requires Fe cation as cofactor.

The protein localises to the cytoplasm. The catalysed reaction is (5Z,8Z,11Z,14Z)-eicosatetraenoate + O2 = (12S)-hydroperoxy-(5Z,8Z,10E,14Z)-eicosatetraenoate. It carries out the reaction 1-O-methyl-(9Z,12Z)-octadecadienoate + O2 = 1-O-methyl-(13S)-hydroperoxy-(9Z,11E)-octadecadienoate. It catalyses the reaction (8Z,11Z,14Z)-eicosatrienoate + O2 = (12S)-hydroperoxy-(8Z,10E,14Z)-eicosatrienoate. The enzyme catalyses (5Z,8Z,11Z)-eicosatrienoate + O2 = (12S)-hydroperoxy-(5Z,8Z,10E)-eicosatrienoate. The catalysed reaction is 1-O-methyl-(5Z,8Z,11Z,14Z)-eicosatetraenoate + O2 = 1-O-methyl-(12S)-hydroperoxy-(5Z,8Z,10E,14Z)-eicosatetraenoate. It carries out the reaction (9Z,12Z)-octadecadienoate + O2 = (13S)-hydroperoxy-(9Z,11E)-octadecadienoate. It catalyses the reaction (4Z,7Z,10Z,13Z,16Z,19Z)-docosahexaenoate + O2 = (14S)-hydroperoxy-(4Z,7Z,10Z,12E,16Z,19Z)-docosahexaenoate. It participates in lipid metabolism; hydroperoxy eicosatetraenoic acid biosynthesis. Its activity is regulated as follows. Arachidonate 12-lipoxygenase activity is decreased when the pH decreases from 7.4 to 6.0. Its function is as follows. Catalyzes the regio and stereo-specific incorporation of a single molecule of dioxygen into free and esterified polyunsaturated fatty acids generating lipid hydroperoxides that can be further reduced to the corresponding hydroxy species. Shows increasing catalytic activity within the series arachidonic acid &lt; 5,8,11-eicosatrienoic acid &lt; linoleic acid &lt; 8,11,14-eicosatrienoic acid. The protein is Polyunsaturated fatty acid (12S)/(13S)-lipoxygenase, epidermal-type of Rattus norvegicus (Rat).